Reading from the N-terminus, the 222-residue chain is Probable RNA 2'-phosphotransferase (222 aa).

Belongs to the KptA/TPT1 family.

In terms of biological role, removes the 2'-phosphate from RNA via an intermediate in which the phosphate is ADP-ribosylated by NAD followed by a presumed transesterification to release the RNA and generate ADP-ribose 1''-2''-cyclic phosphate (APPR&gt;P). May function as an ADP-ribosylase. The polypeptide is Probable RNA 2'-phosphotransferase (Haloarcula marismortui (strain ATCC 43049 / DSM 3752 / JCM 8966 / VKM B-1809) (Halobacterium marismortui)).